A 110-amino-acid chain; its full sequence is Inner membrane protein H108R (110 aa).

A helical transmembrane segment spans residues 10 to 32 (LIVIITILITTRELSTTMLIVSL).

The protein belongs to the asfivirus H108R family.

It is found in the virion membrane. The sequence is that of Inner membrane protein H108R from African swine fever virus (isolate Pig/Kenya/KEN-50/1950) (ASFV).